The following is a 411-amino-acid chain: Proline-responsive transcriptional activator PutR (411 aa).

This sequence belongs to the CdaR family.

Its function is as follows. Activates transcription of the putBCP operon. Requires proline as a coactivator. This chain is Proline-responsive transcriptional activator PutR, found in Bacillus subtilis (strain 168).